We begin with the raw amino-acid sequence, 643 residues long: MKSTKMTTAQALVRFLDNQYVSFDGKEEKFVHGIFTIFGHGIVVGLGQALDENTRDLKVYQGRNEQGMAHAATAFAKQNNRRKIIACSSSIGPGAANMVTAAATATVNNIPLLLLPGDSFATRQPDPVLQQIEQSYNLGITTNDVFKPVCKYWDRVNRPEQLMSAMINAMRVLTDPAETGAVCISLPQDVQGESFEFPEYFFKKRVHKITRPLAVEEEFYECLNIIKNKKKPIIICGGGVRYSEAGDALSKFANKFNIPIGETQAGKSSIKSSDPMNLGGIGVTGNLASNIIAKDADLVIGVGTRFSDFTTASKSLFKNPDVEFVTINLSKFHASKLDSCKMVGDAKECLEYLHKLLEKENYISSYKDEIKDAKIAWKEEMKRLTNIKYEENFEPIIKFRNKESLEEFKKLTDTTITQTSALGLIRECIDDDSIIVGASGSLPGDLQRMWETESLNSYHMEYGYSCMGYEIAAGFGAKLADPEKEVYSILGDGSYLMLHSELITSIQENKKVNVLLFDNCGFGCINNLQMSNGIGNLATEFRYRNSETNKLNGKLIPIDFAKAAEGYGLKTYTAKNLEELKNALIDAKKQKVSTLIDIKVLPKTMTDGYESWWHVGLAEVSEKESVNEAFKNSKKILKGARKY.

Glutamate 65 is a thiamine diphosphate binding site. The tract at residues 441 to 521 (SLPGDLQRMW…VNVLLFDNCG (81 aa)) is thiamine pyrophosphate binding. 2 residues coordinate Mg(2+): aspartate 492 and asparagine 519.

The protein belongs to the TPP enzyme family. Mg(2+) is required as a cofactor. The cofactor is thiamine diphosphate.

The catalysed reaction is 3D-3,5/4-trihydroxycyclohexane-1,2-dione + H2O = 5-deoxy-D-glucuronate + H(+). It participates in polyol metabolism; myo-inositol degradation into acetyl-CoA; acetyl-CoA from myo-inositol: step 3/7. Its function is as follows. Involved in the cleavage of the C1-C2 bond of 3D-(3,5/4)-trihydroxycyclohexane-1,2-dione (THcHDO) to yield 5-deoxy-glucuronate (5DG). The chain is 3D-(3,5/4)-trihydroxycyclohexane-1,2-dione hydrolase from Clostridium botulinum (strain Alaska E43 / Type E3).